A 528-amino-acid polypeptide reads, in one-letter code: Na(+)/H(+) antiporter NhaB (528 aa).

11 helical membrane-spanning segments follow: residues 29–49 (LIIN…LLVI), 52–72 (IFTL…LLAI), 95–115 (VLLL…LLLF), 139–159 (AFLS…AVAV), 203–223 (LLMH…VGEP), 248–268 (VPVF…KIFG), 304–324 (AFIG…VGLI), 349–369 (EEAL…AVII), 390–410 (LVIF…VFVG), 448–468 (ATPN…APLI), and 476–496 (VWMA…AIEL).

It belongs to the NhaB Na(+)/H(+) (TC 2.A.34) antiporter family.

The protein resides in the cell inner membrane. It carries out the reaction 2 Na(+)(in) + 3 H(+)(out) = 2 Na(+)(out) + 3 H(+)(in). Its function is as follows. Na(+)/H(+) antiporter that extrudes sodium in exchange for external protons. This chain is Na(+)/H(+) antiporter NhaB, found in Shewanella woodyi (strain ATCC 51908 / MS32).